Here is an 887-residue protein sequence, read N- to C-terminus: Pyruvate dehydrogenase E1 component (887 aa).

Positions 231, 261, and 263 each coordinate Mg(2+). The residue at position 716 (Lys716) is an N6-acetyllysine.

In terms of assembly, homodimer. Part of the PDH complex, consisting of multiple copies of pyruvate dehydrogenase (E1), dihydrolipoamide acetyltransferase (E2) and lipoamide dehydrogenase (E3). The cofactor is Mg(2+). Thiamine diphosphate is required as a cofactor.

It catalyses the reaction N(6)-[(R)-lipoyl]-L-lysyl-[protein] + pyruvate + H(+) = N(6)-[(R)-S(8)-acetyldihydrolipoyl]-L-lysyl-[protein] + CO2. In terms of biological role, component of the pyruvate dehydrogenase (PDH) complex, that catalyzes the overall conversion of pyruvate to acetyl-CoA and CO(2). The chain is Pyruvate dehydrogenase E1 component (aceE) from Escherichia coli O157:H7.